Consider the following 272-residue polypeptide: GTP cyclohydrolase FolE2 (272 aa).

Belongs to the GTP cyclohydrolase IV family.

It catalyses the reaction GTP + H2O = 7,8-dihydroneopterin 3'-triphosphate + formate + H(+). It functions in the pathway cofactor biosynthesis; 7,8-dihydroneopterin triphosphate biosynthesis; 7,8-dihydroneopterin triphosphate from GTP: step 1/1. Converts GTP to 7,8-dihydroneopterin triphosphate. This is GTP cyclohydrolase FolE2 from Aromatoleum aromaticum (strain DSM 19018 / LMG 30748 / EbN1) (Azoarcus sp. (strain EbN1)).